A 183-amino-acid chain; its full sequence is Capsid protein (183 aa).

Residues 136-183 (NAPILSTLPETTVVRRRGRSPRRRTPSPRRRRSQSPRRRRSQSPASQC) are disordered. A compositionally biased stretch (basic residues) spans 149–176 (VRRRGRSPRRRTPSPRRRRSQSPRRRRS). A phosphoserine; by host mark is found at serine 155, serine 162, and serine 170. The 1; half-length repeat unit spans residues 155–161 (SPRRRTP). The 3 X 8 AA repeats of S-P-R-R-R-[PR]-S-Q stretch occupies residues 155–177 (SPRRRTPSPRRRRSQSPRRRRSQ). The short motif at 158-175 (RRTPSPRRRRSQSPRRRR) is the Bipartite nuclear localization signal element. 2 repeat units span residues 162 to 169 (SPRRRRSQ) and 170 to 177 (SPRRRRSQ). The RNA binding stretch occupies residues 177–183 (QSPASQC).

Belongs to the orthohepadnavirus core antigen family. Homodimerizes, then multimerizes. Interacts with cytosol exposed regions of viral L glycoprotein present in the reticulum-to-Golgi compartment. Interacts with human FLNB. Phosphorylated form interacts with host importin alpha; this interaction depends on the exposure of the NLS, which itself depends upon genome maturation and/or phosphorylation of the capsid protein. Interacts with host NUP153. In terms of processing, phosphorylated by host SRPK1, SRPK2, and maybe protein kinase C or GAPDH. Phosphorylation is critical for pregenomic RNA packaging. Protein kinase C phosphorylation is stimulated by HBx protein and may play a role in transport of the viral genome to the nucleus at the late step during the viral replication cycle.

Its subcellular location is the virion. The protein localises to the host cytoplasm. Self assembles to form an icosahedral capsid. Most capsids appear to be large particles with an icosahedral symmetry of T=4 and consist of 240 copies of capsid protein, though a fraction forms smaller T=3 particles consisting of 180 capsid proteins. Entering capsids are transported along microtubules to the nucleus. Phosphorylation of the capsid is thought to induce exposure of nuclear localization signal in the C-terminal portion of the capsid protein that allows binding to the nuclear pore complex via the importin (karyopherin-) alpha and beta. Capsids are imported in intact form through the nuclear pore into the nuclear basket, where it probably binds NUP153. Only capsids that contain the mature viral genome can release the viral DNA and capsid protein into the nucleoplasm. Immature capsids get stuck in the basket. Capsids encapsulate the pre-genomic RNA and the P protein. Pre-genomic RNA is reverse-transcribed into DNA while the capsid is still in the cytoplasm. The capsid can then either be directed to the nucleus, providing more genomes for transcription, or bud through the endoplasmic reticulum to provide new virions. The polypeptide is Capsid protein (Hepatitis B virus genotype F2 (isolate Brazil/w4B) (HBV-F)).